We begin with the raw amino-acid sequence, 21 residues long: Peptide Hact-2 (21 aa).

Cystine bridges form between cysteine 1–cysteine 18, cysteine 5–cysteine 14, and cysteine 9–cysteine 20.

As to expression, expressed in tentacles.

It is found in the nematocyst. The protein resides in the secreted. Its function is as follows. Peptide of unknown function. Does not exhibit antimicrobial activity against Escherichia coli and Staphylococcus aureus. Promotes cell proliferation of human fibroblast skin cells. Does not exhibit any effect on voltage-gated ion channels, including potassium, sodium, and calcium channels. The protein is Peptide Hact-2 of Heliofungia actiniformis (Mushroom coral).